The chain runs to 418 residues: D-amino acid dehydrogenase (418 aa).

3–17 is an FAD binding site; that stretch reads VLVLGAGVAGVSSAW.

Belongs to the DadA oxidoreductase family. FAD serves as cofactor.

The catalysed reaction is a D-alpha-amino acid + A + H2O = a 2-oxocarboxylate + AH2 + NH4(+). Its pathway is amino-acid degradation; D-alanine degradation; NH(3) and pyruvate from D-alanine: step 1/1. Functionally, oxidative deamination of D-amino acids. The sequence is that of D-amino acid dehydrogenase from Neisseria meningitidis serogroup C / serotype 2a (strain ATCC 700532 / DSM 15464 / FAM18).